The following is a 444-amino-acid chain: Probable D-serine dehydratase (444 aa).

N6-(pyridoxal phosphate)lysine is present on Lys-118.

The protein belongs to the serine/threonine dehydratase family. DsdA subfamily. The cofactor is pyridoxal 5'-phosphate.

The enzyme catalyses D-serine = pyruvate + NH4(+). In Acinetobacter baumannii (strain AB0057), this protein is Probable D-serine dehydratase.